The sequence spans 1384 residues: RRP12-like protein (1384 aa).

The span at 1–13 (MGKFRSKLKRNGK) shows a compositional bias: basic residues. Residues 1 to 32 (MGKFRSKLKRNGKGKTWSRGESATSNPTQMKH) form a disordered region. Residues 19–29 (RGESATSNPTQ) show a composition bias toward polar residues. Ser82, Ser85, Ser96, Ser1094, Ser1095, Ser1117, and Ser1119 each carry phosphoserine. Disordered stretches follow at residues 1082 to 1102 (LRKKQNLEAQEDSSDDELVSG), 1114 to 1155 (LADS…IRED), and 1176 to 1384 (SAQT…KKYK). 2 stretches are compositionally biased toward acidic residues: residues 1090–1099 (AQEDSSDDEL) and 1114–1127 (LADSDSDLPEDMDA). Polar residues predominate over residues 1176-1191 (SAQTATPAQSQKTKAQ). Residues Ser1221, Ser1225, Ser1227, Ser1230, Ser1250, and Ser1251 each carry the phosphoserine modification. 2 stretches are compositionally biased toward polar residues: residues 1276–1285 (SGKTTASSRY) and 1297–1315 (TAGNSDAMSVKSGKSTSRP). Residues 1321-1334 (GSKKAKGDMKKSGK) are compositionally biased toward basic and acidic residues. Residues 1348 to 1362 (LNKRKRSMNSRKFKS) show a composition bias toward basic residues. Over residues 1369 to 1378 (AENGGAGGGR) the composition is skewed to gly residues.

The protein belongs to the RRP12 family.

The protein localises to the nucleus. The protein is RRP12-like protein of Drosophila melanogaster (Fruit fly).